The following is an 884-amino-acid chain: Microsomal triglyceride transfer protein large subunit (884 aa).

Positions 1-21 are cleaved as a signal peptide; that stretch reads MMPVAGLLLCVTAVLCTSALG. The region spanning 26-660 is the Vitellogenin domain; sequence LDNGKLYRYS…QSNNALLHGL (635 aa). Residues cysteine 172 and cysteine 192 are joined by a disulfide bond. N-linked (GlcNAc...) asparagine glycosylation occurs at asparagine 348. Residues cysteine 438 and cysteine 443 are joined by a disulfide bond. Asparagine 787 carries an N-linked (GlcNAc...) asparagine glycan.

As to quaternary structure, heterodimer; heterodimerizes with the protein disulfide isomerase. As to expression, highest expression in the proximal part of the anterior intestine. Lower expression in the distal part of the anterior intestine, in the posterior portion of the intestinal tube and liver. Very low expression levels in heart, brain, ovary, testis and kidney.

The protein resides in the endoplasmic reticulum. The protein localises to the golgi apparatus. The catalysed reaction is a 1,2-diacyl-sn-glycero-3-phosphocholine(in) = a 1,2-diacyl-sn-glycero-3-phosphocholine(out). The enzyme catalyses a 1,2-diacyl-sn-glycero-3-phosphoethanolamine(in) = a 1,2-diacyl-sn-glycero-3-phosphoethanolamine(out). It carries out the reaction a cholesterol ester(in) = a cholesterol ester(out). It catalyses the reaction a triacyl-sn-glycerol(in) = a triacyl-sn-glycerol(out). Inhibited by naringenin. Functionally, catalyzes the transport of triglyceride between phospholipid surfaces. Catalyzes the transport of cholesteryl ester, and phospholipid between phospholipid surfaces. Required for the assembly and secretion of plasma lipoproteins that contain apolipoprotein B. Required for yolk lipid utilization and absorption of dietary lipids in larvae. In Danio rerio (Zebrafish), this protein is Microsomal triglyceride transfer protein large subunit.